We begin with the raw amino-acid sequence, 618 residues long: Carotenoid cleavage dioxygenase 7, chloroplastic (618 aa).

The N-terminal 31 residues, 1 to 31, are a transit peptide targeting the chloroplast; sequence MSLPIPPKFLPPLKSPPIHHHQTPPPLAPPR. The interval 11 to 34 is disordered; the sequence is PPLKSPPIHHHQTPPPLAPPRAAI. Fe cation is bound by residues histidine 266, histidine 319, histidine 398, and histidine 612.

This sequence belongs to the carotenoid oxygenase family. It depends on Fe(2+) as a cofactor. In terms of tissue distribution, expressed in flowers, siliques, inflorescence stems, petiole, leaves and roots.

The protein localises to the plastid. It is found in the chloroplast. It catalyses the reaction 9-cis-beta-carotene + O2 = 9-cis-10'-apo-beta-carotenal + beta-ionone. Its function is as follows. Involved in strigolactones biosynthesis by cleaving asymmetrically a variety of linear and cyclic carotenoids at the 9-10 double bond. Produces one C(13) beta-ionone and the C(27) 10'-apo-beta-carotenal. Strigolactones are hormones that inhibit tillering and shoot branching through the MAX-dependent pathway, contribute to the regulation of shoot architectural response to phosphate-limiting conditions and function as rhizosphere signal that stimulates hyphal branching of arbuscular mycorrhizal fungi and trigger seed germination of root parasitic weeds. No activity on lycopene, lutein, zeaxanthin, violaxanthin or neoxanthin. Probably not involved in abscisic acid biosynthesis. In Arabidopsis thaliana (Mouse-ear cress), this protein is Carotenoid cleavage dioxygenase 7, chloroplastic (CCD7).